The primary structure comprises 436 residues: Trigger factor (436 aa).

One can recognise a PPIase FKBP-type domain in the interval 161 to 246; that stretch reads EDQLNIDFVG…VNTVSEPKLP (86 aa).

The protein belongs to the FKBP-type PPIase family. Tig subfamily.

It is found in the cytoplasm. The enzyme catalyses [protein]-peptidylproline (omega=180) = [protein]-peptidylproline (omega=0). Its function is as follows. Involved in protein export. Acts as a chaperone by maintaining the newly synthesized protein in an open conformation. Functions as a peptidyl-prolyl cis-trans isomerase. This Pseudomonas syringae pv. syringae (strain B728a) protein is Trigger factor.